We begin with the raw amino-acid sequence, 227 residues long: 2,3-bisphosphoglycerate-dependent phosphoglycerate mutase (227 aa).

Substrate-binding positions include R7–N14, T20–G21, R59, E86–Y89, K97, R113–R114, and G182–N183. H8 acts as the Tele-phosphohistidine intermediate in catalysis. Catalysis depends on E86, which acts as the Proton donor/acceptor.

It belongs to the phosphoglycerate mutase family. BPG-dependent PGAM subfamily. As to quaternary structure, homodimer.

The catalysed reaction is (2R)-2-phosphoglycerate = (2R)-3-phosphoglycerate. It functions in the pathway carbohydrate degradation; glycolysis; pyruvate from D-glyceraldehyde 3-phosphate: step 3/5. Catalyzes the interconversion of 2-phosphoglycerate and 3-phosphoglycerate. In Neisseria meningitidis serogroup A / serotype 4A (strain DSM 15465 / Z2491), this protein is 2,3-bisphosphoglycerate-dependent phosphoglycerate mutase.